The chain runs to 278 residues: Probable CCR4-associated factor 1 homolog 5 (278 aa).

The a divalent metal cation site is built by Asp30, Glu32, Asp145, and Asp217.

The protein belongs to the CAF1 family. Component of the CCR4-NOT complex, at least composed of CRR4 and CAF1 proteins. A divalent metal cation is required as a cofactor.

The protein resides in the nucleus. It is found in the cytoplasm. The catalysed reaction is Exonucleolytic cleavage of poly(A) to 5'-AMP.. Functionally, ubiquitous transcription factor required for a diverse set of processes. It is a component of the CCR4 complex involved in the control of gene expression. The protein is Probable CCR4-associated factor 1 homolog 5 (CAF1-5) of Arabidopsis thaliana (Mouse-ear cress).